Consider the following 362-residue polypeptide: MDSPEVTFTLAYLVFAVCFVFTPTEFHSAGLTVQNLLSGWLGSEDAAFVPYHLRRTAATLLCHSLLPLGYYVGMCFAASEKQLYYPSQTPETWRAFLLLALMLPAIACTLIYYWSRDHWACHPLARTLALYALPRSGWQAVASSVNTEFRRIDKFATGVPGARVIVTDTWVMKVTTYRVHVAQQQDVRLTVTEAQQHELSPDSHLPVQLLTIRVASANPAVPAFHIRLNSTEYGELCEKLRAPIRSAANVVIHQSLGDLFLETFASLVEVNPAYSVPSSQDLEACIGCMQTQASVKLVKTCQEVAVGECQQCYCRPMWCLTCMGKWFASRQDPQRPDTWLASRVPCPTCRARFCVLDVCAVR.

Topologically, residues Met1 to Val6 are lumenal. Residues Thr7–His27 traverse the membrane as a helical segment. Topologically, residues Ser28–Thr56 are cytoplasmic. A helical membrane pass occupies residues Ala57 to Ala77. At Ala78–Arg94 the chain is on the lumenal side. A helical transmembrane segment spans residues Ala95 to Ser115. Residues Arg116 to Arg362 lie on the Cytoplasmic side of the membrane. The RING-type; degenerate zinc-finger motif lies at Cys285–Arg350.

It belongs to the TMEM129 family. Integral component of ER-resident dislocation complexes.

It is found in the endoplasmic reticulum membrane. The enzyme catalyses S-ubiquitinyl-[E2 ubiquitin-conjugating enzyme]-L-cysteine + [acceptor protein]-L-lysine = [E2 ubiquitin-conjugating enzyme]-L-cysteine + N(6)-ubiquitinyl-[acceptor protein]-L-lysine.. The protein operates within protein modification; protein ubiquitination. Functionally, E3 ubiquitin-protein ligase involved in ER-associated protein degradation, preferentially associates with the E2 enzyme UBE2J2. Exploited by viral US11 proteins to mediate HLA class I proteins degradation. In Bos taurus (Bovine), this protein is E3 ubiquitin-protein ligase TM129 (TMEM129).